The chain runs to 31 residues: Cyclotide hyen-I (31 aa).

Positions 1–31 form a cross-link, cyclopeptide (Gly-Asp); the sequence is GSTPCGESCVWIPCISGIVGCSCSNKVCYMD. 3 disulfides stabilise this stretch: Cys-5-Cys-21, Cys-9-Cys-23, and Cys-14-Cys-28.

This is a cyclic peptide. In terms of tissue distribution, detected in seeds (at protein level).

Its function is as follows. Probably participates in a plant defense mechanism. This chain is Cyclotide hyen-I, found in Pigea enneasperma (Spade flower).